Reading from the N-terminus, the 372-residue chain is Aminomethyltransferase (372 aa).

The protein belongs to the GcvT family. The glycine cleavage system is composed of four proteins: P, T, L and H.

The enzyme catalyses N(6)-[(R)-S(8)-aminomethyldihydrolipoyl]-L-lysyl-[protein] + (6S)-5,6,7,8-tetrahydrofolate = N(6)-[(R)-dihydrolipoyl]-L-lysyl-[protein] + (6R)-5,10-methylene-5,6,7,8-tetrahydrofolate + NH4(+). Functionally, the glycine cleavage system catalyzes the degradation of glycine. This is Aminomethyltransferase from Synechococcus elongatus (strain ATCC 33912 / PCC 7942 / FACHB-805) (Anacystis nidulans R2).